The following is a 1163-amino-acid chain: Hamartin (1163 aa).

Lysine 30 participates in a covalent cross-link: Glycyl lysine isopeptide (Lys-Gly) (interchain with G-Cter in ubiquitin). The segment covering 295 to 316 (SSYVDTQNSYGGATSTPSSTSR) has biased composition (polar residues). Disordered regions lie at residues 295–337 (SSYV…STRP) and 353–594 (CGMT…QRGV). Positions 321-337 (STPGQLPQSLSSLSTRP) are enriched in low complexity. Residues 393 to 402 (TSPPPAPPCP) show a composition bias toward pro residues. The tract at residues 403-787 (QDDCAHGPAS…QIRQLQHDRE (385 aa)) is mediates interaction with WDR45B. The span at 474–487 (EKDKEEAAISKELS) shows a compositional bias: basic and acidic residues. 6 positions are modified to phosphoserine: serine 487, serine 505, serine 511, serine 521, serine 595, and serine 598. A compositionally biased stretch (polar residues) spans 512–530 (LSGSQRKTHSAASGTQGFS). Coiled-coil stretches lie at residues 721–919 (RKVI…LAKK) and 970–994 (EKDGRLQKLEEDRAEAAEAAEERLD). Positions 1008–1020 (NEEAAGHNGETRT) are enriched in basic and acidic residues. The segment at 1008–1163 (NEEAAGHNGE…DYNETHHEHS (156 aa)) is disordered. The span at 1029–1046 (SCGGRVTGGSSSSSSELS) shows a compositional bias: low complexity. Residues 1066–1083 (EPSSSIPTTVGSLPSSKS) show a composition bias toward polar residues. Positions 1088–1099 (KTRELFRNKSES) are enriched in basic and acidic residues. Phosphoserine is present on serine 1097. Positions 1131 to 1146 (PPSLDAPHPSSPSSDS) are enriched in low complexity. Positions 1154 to 1163 (DYNETHHEHS) are enriched in basic and acidic residues.

As to quaternary structure, component of the TSC-TBC complex (also named Rhebulator complex), composed of 2 molecules of TSC1, 2 molecules of TSC2 and 1 molecule of TBC1D7. Probably forms a complex composed of chaperones HSP90 and HSP70, co-chaperones STIP1/HOP, CDC37, PPP5C, PTGES3/p23, TSC1 and client protein TSC2. Forms a complex composed of chaperones HSP90 and HSP70, co-chaperones CDC37, PPP5C, TSC1 and client protein TSC2, CDK4, AKT, RAF1 and NR3C1; this complex does not contain co-chaperones STIP1/HOP and PTGES3/p23. Forms a complex containing HSP90AA1, TSC1 and TSC2; TSC1 is required to recruit TCS2 to the complex. Interacts (via C-terminus) with the closed form of HSP90AA1 (via the middle domain and TPR repeat-binding motif). Interacts with DOCK7. Interacts with FBXW5. Interacts with WDR45B. Interacts with RPAP3 and URI1. Phosphorylation at Ser-505 does not affect interaction with TSC2. Post-translationally, 'Lys-63'-linked ubiquitinated at Lys-30 by PELI1; the ubiquitination promotes TSC1/TSC2 complex stability. As to expression, highly expressed in brain, spleen and kidney, followed by liver and heart.

The protein localises to the lysosome membrane. The protein resides in the cytoplasm. It is found in the cytosol. Its function is as follows. Non-catalytic component of the TSC-TBC complex, a multiprotein complex that acts as a negative regulator of the canonical mTORC1 complex, an evolutionarily conserved central nutrient sensor that stimulates anabolic reactions and macromolecule biosynthesis to promote cellular biomass generation and growth. The TSC-TBC complex acts as a GTPase-activating protein (GAP) for the small GTPase RHEB, a direct activator of the protein kinase activity of mTORC1. In absence of nutrients, the TSC-TBC complex inhibits mTORC1, thereby preventing phosphorylation of ribosomal protein S6 kinase (RPS6KB1 and RPS6KB2) and EIF4EBP1 (4E-BP1) by the mTORC1 signaling. The TSC-TBC complex is inactivated in response to nutrients, relieving inhibition of mTORC1. Within the TSC-TBC complex, TSC1 stabilizes TSC2 and prevents TSC2 self-aggregation. Involved in microtubule-mediated protein transport via its ability to regulate mTORC1 signaling. Also acts as a co-chaperone for HSP90AA1 facilitating HSP90AA1 chaperoning of protein clients such as kinases, TSC2 and glucocorticoid receptor NR3C1. Increases ATP binding to HSP90AA1 and inhibits HSP90AA1 ATPase activity. Competes with the activating co-chaperone AHSA1 for binding to HSP90AA1, thereby providing a reciprocal regulatory mechanism for chaperoning of client proteins. Recruits TSC2 to HSP90AA1 and stabilizes TSC2 by preventing the interaction between TSC2 and ubiquitin ligase HERC1. The polypeptide is Hamartin (Rattus norvegicus (Rat)).